A 502-amino-acid polypeptide reads, in one-letter code: Probable cytosol aminopeptidase (502 aa).

The Mn(2+) site is built by lysine 269 and aspartate 274. Lysine 281 is an active-site residue. Residues aspartate 292, aspartate 351, and glutamate 353 each coordinate Mn(2+). Arginine 355 is a catalytic residue.

Belongs to the peptidase M17 family. Requires Mn(2+) as cofactor.

It is found in the cytoplasm. It carries out the reaction Release of an N-terminal amino acid, Xaa-|-Yaa-, in which Xaa is preferably Leu, but may be other amino acids including Pro although not Arg or Lys, and Yaa may be Pro. Amino acid amides and methyl esters are also readily hydrolyzed, but rates on arylamides are exceedingly low.. It catalyses the reaction Release of an N-terminal amino acid, preferentially leucine, but not glutamic or aspartic acids.. In terms of biological role, presumably involved in the processing and regular turnover of intracellular proteins. Catalyzes the removal of unsubstituted N-terminal amino acids from various peptides. The protein is Probable cytosol aminopeptidase of Shewanella frigidimarina (strain NCIMB 400).